A 502-amino-acid chain; its full sequence is ATP synthase subunit alpha (502 aa).

169–176 (GDRQTGKT) provides a ligand contact to ATP.

It belongs to the ATPase alpha/beta chains family. F-type ATPases have 2 components, CF(1) - the catalytic core - and CF(0) - the membrane proton channel. CF(1) has five subunits: alpha(3), beta(3), gamma(1), delta(1), epsilon(1). CF(0) has three main subunits: a(1), b(2) and c(9-12). The alpha and beta chains form an alternating ring which encloses part of the gamma chain. CF(1) is attached to CF(0) by a central stalk formed by the gamma and epsilon chains, while a peripheral stalk is formed by the delta and b chains.

Its subcellular location is the cell inner membrane. The enzyme catalyses ATP + H2O + 4 H(+)(in) = ADP + phosphate + 5 H(+)(out). In terms of biological role, produces ATP from ADP in the presence of a proton gradient across the membrane. The alpha chain is a regulatory subunit. This is ATP synthase subunit alpha from Pelobacter propionicus (strain DSM 2379 / NBRC 103807 / OttBd1).